A 481-amino-acid polypeptide reads, in one-letter code: Glutamyl-tRNA(Gln) amidotransferase subunit A (481 aa).

Active-site charge relay system residues include K76 and S151. Catalysis depends on S175, which acts as the Acyl-ester intermediate.

The protein belongs to the amidase family. GatA subfamily. Heterotrimer of A, B and C subunits.

It carries out the reaction L-glutamyl-tRNA(Gln) + L-glutamine + ATP + H2O = L-glutaminyl-tRNA(Gln) + L-glutamate + ADP + phosphate + H(+). Its function is as follows. Allows the formation of correctly charged Gln-tRNA(Gln) through the transamidation of misacylated Glu-tRNA(Gln) in organisms which lack glutaminyl-tRNA synthetase. The reaction takes place in the presence of glutamine and ATP through an activated gamma-phospho-Glu-tRNA(Gln). This Neisseria meningitidis serogroup A / serotype 4A (strain DSM 15465 / Z2491) protein is Glutamyl-tRNA(Gln) amidotransferase subunit A.